The sequence spans 932 residues: Glycine dehydrogenase (decarboxylating) (932 aa).

Lys685 carries the N6-(pyridoxal phosphate)lysine modification.

It belongs to the GcvP family. The glycine cleavage system is composed of four proteins: P, T, L and H. Requires pyridoxal 5'-phosphate as cofactor.

The enzyme catalyses N(6)-[(R)-lipoyl]-L-lysyl-[glycine-cleavage complex H protein] + glycine + H(+) = N(6)-[(R)-S(8)-aminomethyldihydrolipoyl]-L-lysyl-[glycine-cleavage complex H protein] + CO2. Functionally, the glycine cleavage system catalyzes the degradation of glycine. The P protein binds the alpha-amino group of glycine through its pyridoxal phosphate cofactor; CO(2) is released and the remaining methylamine moiety is then transferred to the lipoamide cofactor of the H protein. The sequence is that of Glycine dehydrogenase (decarboxylating) from Brucella abortus (strain S19).